Consider the following 159-residue polypeptide: Protein-export protein SecB (159 aa).

The protein belongs to the SecB family. As to quaternary structure, homotetramer, a dimer of dimers. One homotetramer interacts with 1 SecA dimer.

The protein localises to the cytoplasm. Its function is as follows. One of the proteins required for the normal export of preproteins out of the cell cytoplasm. It is a molecular chaperone that binds to a subset of precursor proteins, maintaining them in a translocation-competent state. It also specifically binds to its receptor SecA. This is Protein-export protein SecB from Pseudomonas fluorescens (strain ATCC BAA-477 / NRRL B-23932 / Pf-5).